A 640-amino-acid polypeptide reads, in one-letter code: PAN2-PAN3 deadenylation complex subunit PAN3 (640 aa).

The C3H1-type zinc-finger motif lies at 17–46 (ENKDILCRNVLIYGHCRYEDQGCTYNHDQN). Composition is skewed to polar residues over residues 43–53 (HDQNKNSSQPE) and 63–87 (DSPS…SQAA). The segment at 43 to 101 (HDQNKNSSQPEAPSKKMFNVDSPSFTPSGQSTVLPKKTTLSSQAASAAPFTPRGGGTPT) is disordered. The pseudokinase domain stretch occupies residues 237–498 (QVIPNSGLPQ…TIEHFMTGIA (262 aa)). ATP-binding positions include asparagine 263, arginine 288, 338-345 (DFHPLSKT), and 397-398 (SK). A coiled-coil region spans residues 499 to 537 (SQMTTFFDLALQDNDEKLFHLAREVENGRIARSLMKLLT). The segment at 538 to 640 (ILERGDYDGV…SKTGAPGANT (103 aa)) is knob domain.

This sequence belongs to the protein kinase superfamily. PAN3 family. In terms of assembly, homodimer. Forms a heterotrimer with a catalytic subunit PAN2 to form the poly(A)-nuclease (PAN) deadenylation complex. Interacts (via PAM-2 motif) with poly(A)-binding protein PAB1 (via PABC domain), conferring substrate specificity of the enzyme complex.

The protein resides in the cytoplasm. Functionally, regulatory subunit of the poly(A)-nuclease (PAN) deadenylation complex, one of two cytoplasmic mRNA deadenylases involved in mRNA turnover. PAN specifically shortens poly(A) tails of RNA and the activity is stimulated by poly(A)-binding protein PAB1. PAN deadenylation is followed by rapid degradation of the shortened mRNA tails by the CCR4-NOT complex. Deadenylated mRNAs are then degraded by two alternative mechanisms, namely exosome-mediated 3'-5' exonucleolytic degradation, or deadenylation-dependent mRNA decaping and subsequent 5'-3' exonucleolytic degradation by XRN1. May also be involved in post-transcriptional maturation of mRNA poly(A) tails. PAN3 acts as a positive regulator for PAN activity, recruiting the catalytic subunit PAN2 to mRNA via its interaction with RNA and with PAB1. This Chaetomium thermophilum (strain DSM 1495 / CBS 144.50 / IMI 039719) (Thermochaetoides thermophila) protein is PAN2-PAN3 deadenylation complex subunit PAN3.